Consider the following 311-residue polypeptide: DNA repair and recombination protein RadA (311 aa).

104–111 lines the ATP pocket; it reads GEFGSGKS.

It belongs to the eukaryotic RecA-like protein family.

Its function is as follows. Involved in DNA repair and in homologous recombination. Binds and assemble on single-stranded DNA to form a nucleoprotein filament. Hydrolyzes ATP in a ssDNA-dependent manner and promotes DNA strand exchange between homologous DNA molecules. The polypeptide is DNA repair and recombination protein RadA (Methanobrevibacter smithii (strain ATCC 35061 / DSM 861 / OCM 144 / PS)).